Here is a 341-residue protein sequence, read N- to C-terminus: Phosphoribosylformylglycinamidine cyclo-ligase (341 aa).

Belongs to the AIR synthase family.

It localises to the cytoplasm. The catalysed reaction is 2-formamido-N(1)-(5-O-phospho-beta-D-ribosyl)acetamidine + ATP = 5-amino-1-(5-phospho-beta-D-ribosyl)imidazole + ADP + phosphate + H(+). It functions in the pathway purine metabolism; IMP biosynthesis via de novo pathway; 5-amino-1-(5-phospho-D-ribosyl)imidazole from N(2)-formyl-N(1)-(5-phospho-D-ribosyl)glycinamide: step 2/2. This is Phosphoribosylformylglycinamidine cyclo-ligase from Lachnospira eligens (strain ATCC 27750 / DSM 3376 / VPI C15-48 / C15-B4) (Eubacterium eligens).